We begin with the raw amino-acid sequence, 397 residues long: Arginine biosynthesis bifunctional protein ArgJ (397 aa).

Positions 147, 173, 184, 270, 392, and 397 each coordinate substrate. The active-site Nucleophile is Thr184.

It belongs to the ArgJ family. In terms of assembly, heterotetramer of two alpha and two beta chains.

It localises to the cytoplasm. It carries out the reaction N(2)-acetyl-L-ornithine + L-glutamate = N-acetyl-L-glutamate + L-ornithine. It catalyses the reaction L-glutamate + acetyl-CoA = N-acetyl-L-glutamate + CoA + H(+). The protein operates within amino-acid biosynthesis; L-arginine biosynthesis; L-ornithine and N-acetyl-L-glutamate from L-glutamate and N(2)-acetyl-L-ornithine (cyclic): step 1/1. It participates in amino-acid biosynthesis; L-arginine biosynthesis; N(2)-acetyl-L-ornithine from L-glutamate: step 1/4. In terms of biological role, catalyzes two activities which are involved in the cyclic version of arginine biosynthesis: the synthesis of N-acetylglutamate from glutamate and acetyl-CoA as the acetyl donor, and of ornithine by transacetylation between N(2)-acetylornithine and glutamate. This Staphylococcus epidermidis (strain ATCC 35984 / DSM 28319 / BCRC 17069 / CCUG 31568 / BM 3577 / RP62A) protein is Arginine biosynthesis bifunctional protein ArgJ.